The chain runs to 323 residues: Methenyltetrahydromethanopterin cyclohydrolase (323 aa).

This sequence belongs to the MCH family.

The protein resides in the cytoplasm. It catalyses the reaction 5,10-methenyl-5,6,7,8-tetrahydromethanopterin + H2O = N(5)-formyl-5,6,7,8-tetrahydromethanopterin + H(+). The protein operates within one-carbon metabolism; methanogenesis from CO(2); 5,10-methenyl-5,6,7,8-tetrahydromethanopterin from CO(2): step 3/3. Functionally, catalyzes the reversible interconversion of 5-formyl-H(4)MPT to methenyl-H(4)MPT(+). The polypeptide is Methenyltetrahydromethanopterin cyclohydrolase (Methanococcus maripaludis (strain C5 / ATCC BAA-1333)).